The chain runs to 932 residues: Protein translocase subunit SecA (932 aa).

ATP is bound by residues Gln-86, 104 to 108 (GEGKT), and Asp-494. The tract at residues 857–932 (EDAGAEAHAS…KPAPKRKKRR (76 aa)) is disordered. Polar residues predominate over residues 905 to 915 (TAGSAGDSNLP). The span at 920–932 (KTNKPAPKRKKRR) shows a compositional bias: basic residues.

It belongs to the SecA family. In terms of assembly, monomer and homodimer. Part of the essential Sec protein translocation apparatus which comprises SecA, SecYEG and auxiliary proteins SecDF. Other proteins may also be involved.

The protein resides in the cell membrane. Its subcellular location is the cytoplasm. The enzyme catalyses ATP + H2O + cellular proteinSide 1 = ADP + phosphate + cellular proteinSide 2.. Its function is as follows. Part of the Sec protein translocase complex. Interacts with the SecYEG preprotein conducting channel. Has a central role in coupling the hydrolysis of ATP to the transfer of proteins into and across the cell membrane, serving as an ATP-driven molecular motor driving the stepwise translocation of polypeptide chains across the membrane. The sequence is that of Protein translocase subunit SecA from Renibacterium salmoninarum (strain ATCC 33209 / DSM 20767 / JCM 11484 / NBRC 15589 / NCIMB 2235).